We begin with the raw amino-acid sequence, 425 residues long: MDVRSMARQARAAQRQLELTSPEERNAALEAIARALEARAGQIVAANRADLAAAEEAGLPGPMIARLRLDEGKLAGVIRGVRAVAELPDPLAVEPQAWIRPNGLRIQRVRVPLGVVGIIYESRPGVTVDAAVLCLKAGNAVLLKGGKEAARSNAALGEAMAAGLQEVGLPVELAQVLPSTREAAQELMAARSLVDVLIPRGGAGLIRATVEQSQVPVIETGTGVCHVYVHRAADLAMAREIVLNAKCSNPAVCNAAETLLVDREVAAPFLAEAGPALLAAGVRLRACPEALAILQETARPDLAGAGPAAVEPATEEDWAAEYLDLCLAVKVVSGLDEALAHIARYGTGHSEAIVTGDAGAADRFLRSVDAAAVYHNASTRFTDGGEFGFGAEIGISTQKLHARGPMGLAELTTYKYVVLGNGQVR.

This sequence belongs to the gamma-glutamyl phosphate reductase family.

Its subcellular location is the cytoplasm. The enzyme catalyses L-glutamate 5-semialdehyde + phosphate + NADP(+) = L-glutamyl 5-phosphate + NADPH + H(+). The protein operates within amino-acid biosynthesis; L-proline biosynthesis; L-glutamate 5-semialdehyde from L-glutamate: step 2/2. Functionally, catalyzes the NADPH-dependent reduction of L-glutamate 5-phosphate into L-glutamate 5-semialdehyde and phosphate. The product spontaneously undergoes cyclization to form 1-pyrroline-5-carboxylate. The protein is Gamma-glutamyl phosphate reductase of Symbiobacterium thermophilum (strain DSM 24528 / JCM 14929 / IAM 14863 / T).